The primary structure comprises 49 residues: Large ribosomal subunit protein bL33 (49 aa).

The protein belongs to the bacterial ribosomal protein bL33 family.

The chain is Large ribosomal subunit protein bL33 from Finegoldia magna (strain ATCC 29328 / DSM 20472 / WAL 2508) (Peptostreptococcus magnus).